A 369-amino-acid polypeptide reads, in one-letter code: MTAQKGELRQGYTTGSCATAAARAALHLLLDGQMPERVSITLPDGGSAEFSPEAGRRDAAGASCCVRKDAGDDPDVTNGLLVCCRVALLDDEPEGHIEFCRGEGVGMVTLPGLGIDVGGPAINPVPRSMIREALGGLLDRYGLRCGVQVTVSVPGGEEVARKTLNARVGVKGGISIIGTSGRVIPYSEEAYLESIARTIRVARHSGSTHLVACAGARSEKLLRRMYPDLPETAFIHYGNRVGSTLDMIQHDGGFRNLTVGVMLAKATKLAQGELDLSSRTVGLNPQFIEHLVRKTGYAEDVALEAKALELVRSLVDIVPFSSSEPLYRALAESCRRVCRNRFPSGGLEFVLMTMQDGCILCDEHGCRDV.

Belongs to the CbiD family.

It carries out the reaction Co-precorrin-5B + S-adenosyl-L-methionine = Co-precorrin-6A + S-adenosyl-L-homocysteine. The protein operates within cofactor biosynthesis; adenosylcobalamin biosynthesis; cob(II)yrinate a,c-diamide from sirohydrochlorin (anaerobic route): step 6/10. Catalyzes the methylation of C-1 in cobalt-precorrin-5B to form cobalt-precorrin-6A. The polypeptide is Cobalt-precorrin-5B C(1)-methyltransferase (Prosthecochloris aestuarii (strain DSM 271 / SK 413)).